We begin with the raw amino-acid sequence, 267 residues long: MAEPLTVSPELTANYAYFFDLDGTLAEIKPHPDQVVVPHKILQLLDRLAAHNAGALALISGRSMTELDALAKPFRFPLAGVHGAERRDINGKTHIVRLPEAVVREVEALLRSTLVALPGTELESKGMAFALHYRQAPEHEAALLALAQHVTQHWPQLALQLGKCVVEIKPKGTNKGEAIAAFMQEAPFAGRIPVFVGDDLTDEAGFGVVNHAGGISVKVGVGATQAAWRLESVPDVWRWLEQINYPQQEQQVMNNRRDGYESFSRSI.

Aspartate 20 serves as the catalytic Nucleophile. Aspartate 20, aspartate 22, and aspartate 198 together coordinate Mg(2+). Substrate is bound at residue 20 to 22 (DLD).

The protein belongs to the trehalose phosphatase family. Mg(2+) is required as a cofactor.

It carries out the reaction alpha,alpha-trehalose 6-phosphate + H2O = alpha,alpha-trehalose + phosphate. It participates in glycan biosynthesis; trehalose biosynthesis. In terms of biological role, removes the phosphate from trehalose 6-phosphate to produce free trehalose. The chain is Trehalose-phosphate phosphatase (otsB) from Salmonella typhimurium (strain SL1344).